Here is a 245-residue protein sequence, read N- to C-terminus: Complement C1q subcomponent subunit A (245 aa).

The first 22 residues, Met-1–Thr-22, serve as a signal peptide directing secretion. Residues Arg-27–Arg-38 show a composition bias toward basic and acidic residues. Residues Arg-27–Arg-114 form a disordered region. One can recognise a Collagen-like domain in the interval Gly-31–Ile-109. Residue Lys-33 is modified to 5-hydroxylysine. O-linked (Gal...) hydroxylysine glycosylation is present at Lys-33. 4-hydroxyproline occurs at positions 39 and 45. Position 48 is a 5-hydroxylysine (Lys-48). Residue Lys-48 is glycosylated (O-linked (Gal...) hydroxylysine). 4-hydroxyproline occurs at positions 54 and 57. Lys-67 carries the post-translational modification 5-hydroxylysine. An O-linked (Gal...) hydroxylysine glycan is attached at Lys-67. A 4-hydroxyproline mark is found at Pro-73, Pro-79, and Pro-85. The residue at position 100 (Lys-100) is a 5-hydroxylysine. Lys-100 carries O-linked (Gal...) hydroxylysine glycosylation. A C1q domain is found at Lys-110–Ala-245. A glycan (N-linked (GlcNAc...) asparagine) is linked at Asn-146. The cysteines at positions 172 and 190 are disulfide-linked. Gln-199 is a Ca(2+) binding site.

In terms of assembly, core component of the complement C1 complex, a calcium-dependent complex composed of 1 molecule of the C1Q subcomplex, 2 molecules of C1R and 2 molecules of C1S. The C1Q subcomplex is composed 18 subunits: 3 chains of C1QA, C1QB, and C1QC trimerize to form 6 collagen-like triple helices connected to six globular ligand-recognition modules (C1q domain). Interacts with CR1 (via Sushi 24 and Sushi 25 domains). Interacts (via C-terminus) with CD33; this interaction activates CD33 inhibitory motifs. As to quaternary structure, (Microbial infection) Interacts with Staphylococcus aureus protein Cna; this interaction results in the inhibition of the classical complement pathway. In terms of processing, O-linked glycans are assumed to be the Glc-Gal disaccharides typically found as secondary modifications of hydroxylated lysines in collagen-like domains.

The protein resides in the secreted. It is found in the cell surface. Its activity is regulated as follows. The C1Q subcomplex is inhibited by sulfated molecules, such as triterpenoid sulfates, heparan sulfate, or chondroitin sulfates. Its function is as follows. Core component of the complement C1 complex, a multiprotein complex that initiates the classical pathway of the complement system, a cascade of proteins that leads to phagocytosis and breakdown of pathogens and signaling that strengthens the adaptive immune system. The classical complement pathway is initiated by the C1Q subcomplex of the C1 complex, which specifically binds IgG or IgM immunoglobulins complexed with antigens, forming antigen-antibody complexes on the surface of pathogens: C1QA, together with C1QB and C1QC, specifically recognizes and binds the Fc regions of IgG or IgM via its C1q domain. Immunoglobulin-binding activates the proenzyme C1R, which cleaves C1S, initiating the proteolytic cascade of the complement system. The C1Q subcomplex is activated by a hexamer of IgG complexed with antigens, while it is activated by a pentameric IgM. The C1Q subcomplex also recognizes and binds phosphatidylserine exposed on the surface of cells undergoing programmed cell death, possibly promoting activation of the complement system. The polypeptide is Complement C1q subcomponent subunit A (Homo sapiens (Human)).